Consider the following 27-residue polypeptide: Carcinustatin-20 (27 aa).

Leucine 27 is modified (leucine amide).

Belongs to the allatostatin family.

The protein localises to the secreted. In terms of biological role, may act as a neurotransmitter or neuromodulator. In Carcinus maenas (Common shore crab), this protein is Carcinustatin-20.